A 328-amino-acid polypeptide reads, in one-letter code: Malate dehydrogenase (328 aa).

NAD(+) is bound at residue glycine 12–glycine 18. Substrate is bound by residues arginine 95 and arginine 101. NAD(+) contacts are provided by residues asparagine 108, glutamine 115, and valine 132–asparagine 134. Residues asparagine 134 and arginine 165 each coordinate substrate. Histidine 190 acts as the Proton acceptor in catalysis.

It belongs to the LDH/MDH superfamily. MDH type 2 family.

It catalyses the reaction (S)-malate + NAD(+) = oxaloacetate + NADH + H(+). Functionally, catalyzes the reversible oxidation of malate to oxaloacetate. In Polaromonas sp. (strain JS666 / ATCC BAA-500), this protein is Malate dehydrogenase.